We begin with the raw amino-acid sequence, 271 residues long: Bifunctional protein FolD (271 aa).

NADP(+) contacts are provided by residues 154 to 156 (GRS), threonine 181, and isoleucine 222.

The protein belongs to the tetrahydrofolate dehydrogenase/cyclohydrolase family. Homodimer.

It catalyses the reaction (6R)-5,10-methylene-5,6,7,8-tetrahydrofolate + NADP(+) = (6R)-5,10-methenyltetrahydrofolate + NADPH. It carries out the reaction (6R)-5,10-methenyltetrahydrofolate + H2O = (6R)-10-formyltetrahydrofolate + H(+). It functions in the pathway one-carbon metabolism; tetrahydrofolate interconversion. Its function is as follows. Catalyzes the oxidation of 5,10-methylenetetrahydrofolate to 5,10-methenyltetrahydrofolate and then the hydrolysis of 5,10-methenyltetrahydrofolate to 10-formyltetrahydrofolate. The sequence is that of Bifunctional protein FolD from Thermosipho africanus (strain TCF52B).